We begin with the raw amino-acid sequence, 163 residues long: Cyanate hydratase (163 aa).

Residues arginine 103, glutamate 106, and serine 129 contribute to the active site.

It belongs to the cyanase family.

It catalyses the reaction cyanate + hydrogencarbonate + 3 H(+) = NH4(+) + 2 CO2. In terms of biological role, catalyzes the reaction of cyanate with bicarbonate to produce ammonia and carbon dioxide. This chain is Cyanate hydratase, found in Talaromyces stipitatus (strain ATCC 10500 / CBS 375.48 / QM 6759 / NRRL 1006) (Penicillium stipitatum).